The following is a 156-amino-acid chain: Protein GLUTAMINE DUMPER 4 (156 aa).

The Extracellular segment spans residues 1–39 (MRPLSIKPTSLDVARHATSVESFGNHRPPISPWHSPVPY). The chain crosses the membrane as a helical span at residues 40 to 60 (LFGGLAAMLGLIAFALLILAC). Residues 61–156 (SYWRLSTSGD…AKENEETTSQ (96 aa)) are Cytoplasmic-facing. Residues 67–87 (TSGDDSGERVDEEKESRSGVK) are disordered. Basic and acidic residues predominate over residues 72 to 84 (SGERVDEEKESRS). A VIMAG motif is present at residues 99 to 103 (VIMAG). A disordered region spans residues 136-156 (AGEEKMGDREKAKENEETTSQ).

Belongs to the GLUTAMINE DUMPER 1 (TC 9.B.60) family. As to expression, expressed in the vascular tissues, even in the minor veins of the leaves.

It localises to the membrane. In terms of biological role, probable subunit of an amino acid transporter involved in the regulation of the amino acid metabolism. Stimulates amino acid export by activating nonselective amino acid facilitators. The protein is Protein GLUTAMINE DUMPER 4 (GDU4) of Arabidopsis thaliana (Mouse-ear cress).